The sequence spans 156 residues: Small ribosomal subunit protein uS7 (156 aa).

Belongs to the universal ribosomal protein uS7 family. In terms of assembly, part of the 30S ribosomal subunit. Contacts proteins S9 and S11.

One of the primary rRNA binding proteins, it binds directly to 16S rRNA where it nucleates assembly of the head domain of the 30S subunit. Is located at the subunit interface close to the decoding center, probably blocks exit of the E-site tRNA. This Staphylococcus saprophyticus subsp. saprophyticus (strain ATCC 15305 / DSM 20229 / NCIMB 8711 / NCTC 7292 / S-41) protein is Small ribosomal subunit protein uS7.